A 152-amino-acid chain; its full sequence is Snaclec 5 (152 aa).

An N-terminal signal peptide occupies residues 1–23 (MGRFIFLSSGLLVVFLSLSGTGA). 3 disulfides stabilise this stretch: C27–C38, C55–C148, and C123–C140. The C-type lectin domain maps to 34-149 (YGQHCYRAFK…CASHNPFVCK (116 aa)).

The protein belongs to the snaclec family. Heterodimer; disulfide-linked. As to expression, expressed by the venom gland.

Its subcellular location is the secreted. Its function is as follows. Interferes with one step of hemostasis (modulation of platelet aggregation, or coagulation cascade, for example). The protein is Snaclec 5 of Bitis arietans (African puff adder).